We begin with the raw amino-acid sequence, 151 residues long: 18 kDa heat shock protein (151 aa).

The sHSP domain maps to 38–151 (TFNGNAGFKV…KDNGRRIDIH (114 aa)).

This sequence belongs to the small heat shock protein (HSP20) family.

Its function is as follows. Probable chaperone. In Clostridium acetobutylicum (strain ATCC 824 / DSM 792 / JCM 1419 / IAM 19013 / LMG 5710 / NBRC 13948 / NRRL B-527 / VKM B-1787 / 2291 / W), this protein is 18 kDa heat shock protein (hsp18).